Here is a 227-residue protein sequence, read N- to C-terminus: Cytochrome c oxidase subunit 2 (227 aa).

Residues 1–14 lie on the Mitochondrial intermembrane side of the membrane; that stretch reads MANHSQLGFQDASS. Residues 15 to 45 traverse the membrane as a helical segment; the sequence is PIMEELVEFHDHALMVALAICSLVLYLLTLM. Over 46–58 the chain is Mitochondrial matrix; the sequence is LMEKLSSNTVDAQ. A helical transmembrane segment spans residues 59 to 86; it reads EVELIWTILPAIVLVLLALPSLQILYMM. Residues 87–227 are Mitochondrial intermembrane-facing; sequence DEIDEPDLTL…FEAWSSLLSS (141 aa). 6 residues coordinate Cu cation: His-160, Cys-195, Glu-197, Cys-199, His-203, and Met-206. Position 197 (Glu-197) interacts with Mg(2+).

It belongs to the cytochrome c oxidase subunit 2 family. Component of the cytochrome c oxidase (complex IV, CIV), a multisubunit enzyme composed of 14 subunits. The complex is composed of a catalytic core of 3 subunits MT-CO1, MT-CO2 and MT-CO3, encoded in the mitochondrial DNA, and 11 supernumerary subunits COX4I, COX5A, COX5B, COX6A, COX6B, COX6C, COX7A, COX7B, COX7C, COX8 and NDUFA4, which are encoded in the nuclear genome. The complex exists as a monomer or a dimer and forms supercomplexes (SCs) in the inner mitochondrial membrane with NADH-ubiquinone oxidoreductase (complex I, CI) and ubiquinol-cytochrome c oxidoreductase (cytochrome b-c1 complex, complex III, CIII), resulting in different assemblies (supercomplex SCI(1)III(2)IV(1) and megacomplex MCI(2)III(2)IV(2)). Found in a complex with TMEM177, COA6, COX18, COX20, SCO1 and SCO2. Interacts with TMEM177 in a COX20-dependent manner. Interacts with COX20. Interacts with COX16. Requires Cu cation as cofactor.

It is found in the mitochondrion inner membrane. The catalysed reaction is 4 Fe(II)-[cytochrome c] + O2 + 8 H(+)(in) = 4 Fe(III)-[cytochrome c] + 2 H2O + 4 H(+)(out). In terms of biological role, component of the cytochrome c oxidase, the last enzyme in the mitochondrial electron transport chain which drives oxidative phosphorylation. The respiratory chain contains 3 multisubunit complexes succinate dehydrogenase (complex II, CII), ubiquinol-cytochrome c oxidoreductase (cytochrome b-c1 complex, complex III, CIII) and cytochrome c oxidase (complex IV, CIV), that cooperate to transfer electrons derived from NADH and succinate to molecular oxygen, creating an electrochemical gradient over the inner membrane that drives transmembrane transport and the ATP synthase. Cytochrome c oxidase is the component of the respiratory chain that catalyzes the reduction of oxygen to water. Electrons originating from reduced cytochrome c in the intermembrane space (IMS) are transferred via the dinuclear copper A center (CU(A)) of subunit 2 and heme A of subunit 1 to the active site in subunit 1, a binuclear center (BNC) formed by heme A3 and copper B (CU(B)). The BNC reduces molecular oxygen to 2 water molecules using 4 electrons from cytochrome c in the IMS and 4 protons from the mitochondrial matrix. The chain is Cytochrome c oxidase subunit 2 (MT-CO2) from Gallus gallus (Chicken).